The sequence spans 115 residues: Meiotically up-regulated gene 106 protein (115 aa).

An N-terminal signal peptide occupies residues 1–34; the sequence is MSIKVEWIKFTRLKKCATLLVQLSLLRYRYMVLA. 2 helical membrane-spanning segments follow: residues 41 to 60 and 81 to 103; these read CIVVTIYCGCLFWFSNGALF and GVKLKIFLFTILLAFETNTFTPY.

The protein resides in the membrane. In terms of biological role, has a role in meiosis. This Schizosaccharomyces pombe (strain 972 / ATCC 24843) (Fission yeast) protein is Meiotically up-regulated gene 106 protein (mug106).